Here is a 196-residue protein sequence, read N- to C-terminus: Protein GrpE (196 aa).

The segment at 1–24 (MAENERTTENFQPQDPSYAEAATT) is disordered.

It belongs to the GrpE family. In terms of assembly, homodimer.

It is found in the cytoplasm. Functionally, participates actively in the response to hyperosmotic and heat shock by preventing the aggregation of stress-denatured proteins, in association with DnaK and GrpE. It is the nucleotide exchange factor for DnaK and may function as a thermosensor. Unfolded proteins bind initially to DnaJ; upon interaction with the DnaJ-bound protein, DnaK hydrolyzes its bound ATP, resulting in the formation of a stable complex. GrpE releases ADP from DnaK; ATP binding to DnaK triggers the release of the substrate protein, thus completing the reaction cycle. Several rounds of ATP-dependent interactions between DnaJ, DnaK and GrpE are required for fully efficient folding. This chain is Protein GrpE, found in Gloeobacter violaceus (strain ATCC 29082 / PCC 7421).